The chain runs to 118 residues: LYR motif containing protein 1 (118 aa).

Positions 91–118 (TQKGRKLRAQQRLRKQAKPVYLQSQDET) are disordered. Residues 93–107 (KGRKLRAQQRLRKQA) show a composition bias toward basic residues.

Belongs to the complex I LYR family.

This Danio rerio (Zebrafish) protein is LYR motif containing protein 1 (lyrm1).